The chain runs to 301 residues: uncharacterized protein (301 aa).

A divalent metal cation is bound by residues E146, E148, and D177.

Belongs to the FAH family.

This is an uncharacterized protein from Staphylococcus epidermidis (strain ATCC 12228 / FDA PCI 1200).